The chain runs to 435 residues: Tol-Pal system protein TolB (435 aa).

The N-terminal stretch at 1-20 (MRKIIAGVFIFVFLISNLYA) is a signal peptide.

It belongs to the TolB family. As to quaternary structure, the Tol-Pal system is composed of five core proteins: the inner membrane proteins TolA, TolQ and TolR, the periplasmic protein TolB and the outer membrane protein Pal. They form a network linking the inner and outer membranes and the peptidoglycan layer.

It localises to the periplasm. Its function is as follows. Part of the Tol-Pal system, which plays a role in outer membrane invagination during cell division and is important for maintaining outer membrane integrity. This Francisella tularensis subsp. tularensis (strain WY96-3418) protein is Tol-Pal system protein TolB.